A 211-amino-acid polypeptide reads, in one-letter code: Thiamine-phosphate synthase (211 aa).

4-amino-2-methyl-5-(diphosphooxymethyl)pyrimidine is bound by residues 44–48 (QYRNK) and Asn-75. 2 residues coordinate Mg(2+): Asp-76 and Asp-95. Position 114 (Ser-114) interacts with 4-amino-2-methyl-5-(diphosphooxymethyl)pyrimidine. 140–142 (TKS) contributes to the 2-[(2R,5Z)-2-carboxy-4-methylthiazol-5(2H)-ylidene]ethyl phosphate binding site. Lys-143 contributes to the 4-amino-2-methyl-5-(diphosphooxymethyl)pyrimidine binding site. A 2-[(2R,5Z)-2-carboxy-4-methylthiazol-5(2H)-ylidene]ethyl phosphate-binding site is contributed by Gly-171.

Belongs to the thiamine-phosphate synthase family. Requires Mg(2+) as cofactor.

The enzyme catalyses 2-[(2R,5Z)-2-carboxy-4-methylthiazol-5(2H)-ylidene]ethyl phosphate + 4-amino-2-methyl-5-(diphosphooxymethyl)pyrimidine + 2 H(+) = thiamine phosphate + CO2 + diphosphate. It carries out the reaction 2-(2-carboxy-4-methylthiazol-5-yl)ethyl phosphate + 4-amino-2-methyl-5-(diphosphooxymethyl)pyrimidine + 2 H(+) = thiamine phosphate + CO2 + diphosphate. The catalysed reaction is 4-methyl-5-(2-phosphooxyethyl)-thiazole + 4-amino-2-methyl-5-(diphosphooxymethyl)pyrimidine + H(+) = thiamine phosphate + diphosphate. Its pathway is cofactor biosynthesis; thiamine diphosphate biosynthesis; thiamine phosphate from 4-amino-2-methyl-5-diphosphomethylpyrimidine and 4-methyl-5-(2-phosphoethyl)-thiazole: step 1/1. Functionally, condenses 4-methyl-5-(beta-hydroxyethyl)thiazole monophosphate (THZ-P) and 2-methyl-4-amino-5-hydroxymethyl pyrimidine pyrophosphate (HMP-PP) to form thiamine monophosphate (TMP). This Koribacter versatilis (strain Ellin345) protein is Thiamine-phosphate synthase.